The primary structure comprises 198 residues: Large ribosomal subunit protein bL21 (198 aa).

It belongs to the bacterial ribosomal protein bL21 family. Part of the 50S ribosomal subunit. Contacts protein L20.

In terms of biological role, this protein binds to 23S rRNA in the presence of protein L20. In Ruegeria sp. (strain TM1040) (Silicibacter sp.), this protein is Large ribosomal subunit protein bL21.